The chain runs to 387 residues: O-phospho-L-seryl-tRNA:Cys-tRNA synthase 2 (387 aa).

Residues 89–90, N196, and 219–221 contribute to the pyridoxal 5'-phosphate site; these read AR and SGH. K222 carries the N6-(pyridoxal phosphate)lysine modification.

This sequence belongs to the SepCysS family. As to quaternary structure, homodimer. Interacts with SepRS. It depends on pyridoxal 5'-phosphate as a cofactor.

The catalysed reaction is O-phospho-L-seryl-tRNA(Cys) + hydrogen sulfide + H(+) = L-cysteinyl-tRNA(Cys) + phosphate. Functionally, converts O-phospho-L-seryl-tRNA(Cys) (Sep-tRNA(Cys)) to L-cysteinyl-tRNA(Cys) (Cys-tRNA(Cys)). This Methanococcoides burtonii (strain DSM 6242 / NBRC 107633 / OCM 468 / ACE-M) protein is O-phospho-L-seryl-tRNA:Cys-tRNA synthase 2.